A 355-amino-acid chain; its full sequence is Putative testis-specific Y-encoded-like protein 3 (355 aa).

The segment at 1 to 131 is disordered; sequence MADKRAGTPE…GEEKQEVAAE (131 aa). Over residues 93-128 the composition is skewed to basic and acidic residues; it reads ASEKAEDANKEEGAIFKKEPAEEVEKQQEGEEKQEV.

The protein belongs to the nucleosome assembly protein (NAP) family.

The sequence is that of Putative testis-specific Y-encoded-like protein 3 (TSPY26P) from Homo sapiens (Human).